The sequence spans 653 residues: Acetyl-coenzyme A synthetase (653 aa).

Residues 196–199 and threonine 315 each bind CoA; that span reads RGGK. ATP-binding positions include 391–393, 415–420, aspartate 506, and arginine 521; these read GEP and DTWWQT. Serine 529 contributes to the CoA binding site. An ATP-binding site is contributed by arginine 532. Mg(2+)-binding residues include valine 543 and valine 548. Lysine 618 is subject to N6-acetyllysine.

Belongs to the ATP-dependent AMP-binding enzyme family. Requires Mg(2+) as cofactor. Acetylated. Deacetylation by the SIR2-homolog deacetylase activates the enzyme.

The catalysed reaction is acetate + ATP + CoA = acetyl-CoA + AMP + diphosphate. Functionally, catalyzes the conversion of acetate into acetyl-CoA (AcCoA), an essential intermediate at the junction of anabolic and catabolic pathways. AcsA undergoes a two-step reaction. In the first half reaction, AcsA combines acetate with ATP to form acetyl-adenylate (AcAMP) intermediate. In the second half reaction, it can then transfer the acetyl group from AcAMP to the sulfhydryl group of CoA, forming the product AcCoA. This is Acetyl-coenzyme A synthetase from Laribacter hongkongensis (strain HLHK9).